The chain runs to 594 residues: Protein FAM200C (594 aa).

The protein is Protein FAM200C of Homo sapiens (Human).